The primary structure comprises 428 residues: Gamma-glutamyl phosphate reductase (428 aa).

It belongs to the gamma-glutamyl phosphate reductase family.

Its subcellular location is the cytoplasm. The enzyme catalyses L-glutamate 5-semialdehyde + phosphate + NADP(+) = L-glutamyl 5-phosphate + NADPH + H(+). It participates in amino-acid biosynthesis; L-proline biosynthesis; L-glutamate 5-semialdehyde from L-glutamate: step 2/2. Its function is as follows. Catalyzes the NADPH-dependent reduction of L-glutamate 5-phosphate into L-glutamate 5-semialdehyde and phosphate. The product spontaneously undergoes cyclization to form 1-pyrroline-5-carboxylate. The protein is Gamma-glutamyl phosphate reductase of Chromohalobacter salexigens (strain ATCC BAA-138 / DSM 3043 / CIP 106854 / NCIMB 13768 / 1H11).